Here is a 347-residue protein sequence, read N- to C-terminus: GMP reductase (347 aa).

108–131 serves as a coordination point for NADP(+); sequence ADFEKTKQILDLNSALNFVCIDVA. Residues Gly-181 and Gly-183 each contribute to the K(+) site. Cys-186 acts as the Thioimidate intermediate in catalysis. Position 216 to 239 (216 to 239) interacts with NADP(+); that stretch reads IVSDGGCTTPGDVAKAFGGGADFV.

It belongs to the IMPDH/GMPR family. GuaC type 1 subfamily. In terms of assembly, homotetramer.

The catalysed reaction is IMP + NH4(+) + NADP(+) = GMP + NADPH + 2 H(+). Its function is as follows. Catalyzes the irreversible NADPH-dependent deamination of GMP to IMP. It functions in the conversion of nucleobase, nucleoside and nucleotide derivatives of G to A nucleotides, and in maintaining the intracellular balance of A and G nucleotides. The sequence is that of GMP reductase from Escherichia coli O81 (strain ED1a).